The sequence spans 213 residues: Glutathione S-transferase DHAR1, mitochondrial (213 aa).

Lys8 and Asp19 together coordinate glutathione. L-ascorbate is bound by residues Lys8 and Asp19. The 74-residue stretch at 10–83 (AVGAPDHLGD…DVIVGILEEK (74 aa)) folds into the GST N-terminal domain. Cys20 serves as the catalytic Nucleophile. At Cys20 the chain carries S-glutathionyl cysteine. The Glutathione-binding motif lies at 20–25 (CPFSQR). Glutathione is bound by residues Lys47, Val60, and Ser73. A GST C-terminal domain is found at 84–213 (YPDPPLKTPA…ISGWAPKVNP (130 aa)). The Copper-binding signature appears at 133–137 (HLKSH). The glutathione site is built by His160 and Trp207. An L-ascorbate-binding site is contributed by Lys210.

It belongs to the GST superfamily. DHAR family. In terms of assembly, monomer. Interacts with copper (Cu). Post-translationally, spontaneous S-glutathionylation in the presence of oxidized glutathione (GSSG). As to expression, expressed at least in roots and leaves.

It localises to the mitochondrion. It is found in the cytoplasm. The protein resides in the cytosol. Its subcellular location is the peroxisome. The protein localises to the membrane. It carries out the reaction RX + glutathione = an S-substituted glutathione + a halide anion + H(+). The catalysed reaction is L-dehydroascorbate + 2 glutathione = glutathione disulfide + L-ascorbate. In terms of biological role, displays a dual function. As a soluble protein, exhibits glutathione-dependent thiol transferase and dehydroascorbate (DHA) reductase activities. Key component of the ascorbate recycling system. Involved in the redox homeostasis, especially in scavenging of ROS under oxidative stresses, subsequently to biotic or abiotic inducers. As a peripheral membrane protein, could also function as voltage-gated ion channel. The protein is Glutathione S-transferase DHAR1, mitochondrial of Arabidopsis thaliana (Mouse-ear cress).